The sequence spans 429 residues: Acetylornithine aminotransferase (429 aa).

Pyridoxal 5'-phosphate-binding positions include 126–127 (GA) and F160. Position 163 (R163) interacts with N(2)-acetyl-L-ornithine. 251–254 (DEVQ) serves as a coordination point for pyridoxal 5'-phosphate. K280 is modified (N6-(pyridoxal phosphate)lysine). S307 contacts N(2)-acetyl-L-ornithine. A pyridoxal 5'-phosphate-binding site is contributed by T308.

Belongs to the class-III pyridoxal-phosphate-dependent aminotransferase family. ArgD subfamily. As to quaternary structure, homodimer. Requires pyridoxal 5'-phosphate as cofactor.

It is found in the cytoplasm. It catalyses the reaction N(2)-acetyl-L-ornithine + 2-oxoglutarate = N-acetyl-L-glutamate 5-semialdehyde + L-glutamate. It participates in amino-acid biosynthesis; L-arginine biosynthesis; N(2)-acetyl-L-ornithine from L-glutamate: step 4/4. N-acetylornithine aminotransferase activity is stimulated by the addition of Mg(2+), Ca(2+) or Mn(2+), and inhibited by the addition of Zn(2+), Cu(2+), Co(2+) or Ni(2+). Functionally, catalyzes the reversible conversion of N-acetylornithine to N-acetylglutamate-5-semialdehyde. In vitro, also shows very low ornithine aminotransferase (OAT) and gamma-aminobutyrate aminotransferase (GABA-AT) activity, catalyzing the conversion of ornithine (Orn) to glutamate-5-semialdehyde and of gamma-aminobutyric acid (GABA) to succinate semialdehyde. It has been shown to function as a GABA-AT and contributes to closing the tricarboxylic acid cycle of Synechocystis sp. PCC6803 via the GABA shunt. However, the catalytic efficiency toward N-acetylornithine is 2500-fold and 10700-fold higher than that toward ornithine and gamma-aminobutyrate, respectively, indicating that the protein mainly functions as an N-acetylornithine aminotransferase. The polypeptide is Acetylornithine aminotransferase (Synechocystis sp. (strain ATCC 27184 / PCC 6803 / Kazusa)).